The chain runs to 177 residues: Bifunctional protein PyrR (177 aa).

The PRPP-binding motif lies at 99 to 111 (VILVDDVIYKGRT).

Belongs to the purine/pyrimidine phosphoribosyltransferase family. PyrR subfamily.

The catalysed reaction is UMP + diphosphate = 5-phospho-alpha-D-ribose 1-diphosphate + uracil. Regulates the transcription of the pyrimidine nucleotide (pyr) operon in response to exogenous pyrimidines. Its function is as follows. Also displays a weak uracil phosphoribosyltransferase activity which is not physiologically significant. The chain is Bifunctional protein PyrR from Microcystis aeruginosa (strain NIES-843 / IAM M-2473).